Consider the following 495-residue polypeptide: Serine/threonine-protein kinase STN8, chloroplastic (495 aa).

Residues 1–49 (MASLLSPATPTATSAAFHSCSTAGFSTPTHISSQNSSLSLLSRRGCMMR) constitute a chloroplast transit peptide. Residues 133 to 477 (FLVTEKLGEG…AAAALRHPYF (345 aa)) form the Protein kinase domain. ATP-binding positions include 139 to 147 (LGEGSFGVV) and Lys186. The active-site Proton acceptor is the Asp308.

It belongs to the protein kinase superfamily. Ser/Thr protein kinase family.

Its subcellular location is the plastid. The protein resides in the chloroplast thylakoid. It carries out the reaction L-seryl-[protein] + ATP = O-phospho-L-seryl-[protein] + ADP + H(+). It catalyses the reaction L-threonyl-[protein] + ATP = O-phospho-L-threonyl-[protein] + ADP + H(+). Light-dependent serine/threonine protein kinase that specifically phosphorylates N-terminal threonine residues in psbA/D1, psbD/D2, psbC/CP43 and psbH, which are components of the core antenna complex of photosystem II. Phosphorylation of PSII core components facilitates the exchange of chlorophyll proteins between the grana and the stroma lamellae. Also involved in the phosphorylation of the calcium-sensing receptor (CaS). This is Serine/threonine-protein kinase STN8, chloroplastic (STN8) from Arabidopsis thaliana (Mouse-ear cress).